The sequence spans 669 residues: NAD-dependent malic enzyme, mitochondrial (669 aa).

Residues 33-43 show a composition bias toward polar residues; the sequence is IQQSRLYSSNT. Residues 33 to 68 are disordered; the sequence is IQQSRLYSSNTRSHKATTTRENTFQKPYSDEEVTKT. Arg142 is a fumarate binding site. Tyr187 functions as the Proton donor in the catalytic mechanism. Lys259 serves as the catalytic Proton acceptor. Residues Glu330, Asp331, and Asp354 each contribute to the a divalent metal cation site. 2 residues coordinate NAD(+): Ala387 and Ala390. Positions 499 and 539 each coordinate (S)-malate.

Belongs to the malic enzymes family. Mg(2+) serves as cofactor. Requires Mn(2+) as cofactor.

It localises to the mitochondrion matrix. The enzyme catalyses (S)-malate + NAD(+) = pyruvate + CO2 + NADH. It carries out the reaction oxaloacetate + H(+) = pyruvate + CO2. Functionally, NAD-dependent mitochondrial malic enzyme that catalyzes the oxidative decarboxylation of malate to pyruvate. The sequence is that of NAD-dependent malic enzyme, mitochondrial (MAE1) from Saccharomyces cerevisiae (strain ATCC 204508 / S288c) (Baker's yeast).